Here is a 255-residue protein sequence, read N- to C-terminus: MKIRKKKMKLKGKVKKYLMDKLNDNEKLHFSLLDPFKINSSEELKYIAKNLYNVGTDAFLIGGTLGVSKDKLDFVISLLDDYEIPKIIFPSNINLLSEKADALLFLSLLNSDDIYYVIGAQIVAAPIIKMLQIEVIPTAYVIVGHGGTAAHIGKARVIPYDNFELATAYTLAAEYLGMDFVYLEAGSGAPEPIRPEMISFIKKASSIPLIIGGGIRSVEVALKLVEAGANIIVTGNIIERDVDKAIKIIRGIKNK.

Mg(2+) contacts are provided by D34 and T64. Sn-glycerol 1-phosphate-binding positions include 182-188, 213-214, and 235-236; these read YLEAGSG, GG, and GN.

This sequence belongs to the GGGP/HepGP synthase family. Group II subfamily. Mg(2+) serves as cofactor.

It is found in the cytoplasm. It catalyses the reaction sn-glycerol 1-phosphate + (2E,6E,10E)-geranylgeranyl diphosphate = sn-3-O-(geranylgeranyl)glycerol 1-phosphate + diphosphate. It functions in the pathway membrane lipid metabolism; glycerophospholipid metabolism. Functionally, prenyltransferase that catalyzes the transfer of the geranylgeranyl moiety of geranylgeranyl diphosphate (GGPP) to the C3 hydroxyl of sn-glycerol-1-phosphate (G1P). This reaction is the first ether-bond-formation step in the biosynthesis of archaeal membrane lipids. The polypeptide is Geranylgeranylglyceryl phosphate synthase (Saccharolobus islandicus (strain M.14.25 / Kamchatka #1) (Sulfolobus islandicus)).